Consider the following 182-residue polypeptide: tRNA-splicing endonuclease (182 aa).

Active-site residues include Y119, H127, and K158.

Belongs to the tRNA-intron endonuclease family. Archaeal short subfamily. In terms of assembly, homotetramer; although the tetramer contains four active sites, only two participate in the cleavage. Therefore, it should be considered as a dimer of dimers.

The catalysed reaction is pretRNA = a 3'-half-tRNA molecule with a 5'-OH end + a 5'-half-tRNA molecule with a 2',3'-cyclic phosphate end + an intron with a 2',3'-cyclic phosphate and a 5'-hydroxyl terminus.. Functionally, endonuclease that removes tRNA introns. Cleaves pre-tRNA at the 5'- and 3'-splice sites to release the intron. The products are an intron and two tRNA half-molecules bearing 2',3' cyclic phosphate and 5'-OH termini. Recognizes a pseudosymmetric substrate in which 2 bulged loops of 3 bases are separated by a stem of 4 bp. In Saccharolobus islandicus (strain M.14.25 / Kamchatka #1) (Sulfolobus islandicus), this protein is tRNA-splicing endonuclease.